The chain runs to 305 residues: tRNA pseudouridine synthase B (305 aa).

Catalysis depends on aspartate 39, which acts as the Nucleophile.

It belongs to the pseudouridine synthase TruB family. Type 1 subfamily.

It catalyses the reaction uridine(55) in tRNA = pseudouridine(55) in tRNA. Its function is as follows. Responsible for synthesis of pseudouridine from uracil-55 in the psi GC loop of transfer RNAs. This chain is tRNA pseudouridine synthase B, found in Staphylococcus aureus (strain bovine RF122 / ET3-1).